The following is a 116-amino-acid chain: Small ribosomal subunit protein bS16 (116 aa).

The disordered stretch occupies residues 88 to 116 (RNNPKAAVPGKRMAELAKKKADRAAASAE). The segment covering 99 to 110 (RMAELAKKKADR) has biased composition (basic and acidic residues).

It belongs to the bacterial ribosomal protein bS16 family.

This is Small ribosomal subunit protein bS16 from Cereibacter sphaeroides (strain ATCC 17029 / ATH 2.4.9) (Rhodobacter sphaeroides).